The primary structure comprises 457 residues: COBRA-like protein 3 (457 aa).

A signal peptide spans 1-35 (MAVGGAGSSRSVAPCCCCAVLLAAALLFSAPATTE). Residues asparagine 45, asparagine 170, asparagine 178, asparagine 217, asparagine 242, asparagine 258, asparagine 326, asparagine 341, and asparagine 361 are each glycosylated (N-linked (GlcNAc...) asparagine). The GPI-anchor amidated asparagine moiety is linked to residue asparagine 430. A propeptide spans 431-457 (ASPLTKQPLTLSVLVFSIVLATLLAYA) (removed in mature form). The helical transmembrane segment at 437 to 457 (QPLTLSVLVFSIVLATLLAYA) threads the bilayer.

Belongs to the COBRA family.

Its subcellular location is the cell membrane. In terms of biological role, involved in determining the orientation of cell expansion, probably by playing an important role in cellulose deposition. May act by recruiting cellulose synthesizing complexes to discrete positions on the cell surface. The protein is COBRA-like protein 3 (BC1L4) of Oryza sativa subsp. japonica (Rice).